We begin with the raw amino-acid sequence, 107 residues long: Large ribosomal subunit protein uL24 (107 aa).

The protein belongs to the universal ribosomal protein uL24 family. Part of the 50S ribosomal subunit.

One of two assembly initiator proteins, it binds directly to the 5'-end of the 23S rRNA, where it nucleates assembly of the 50S subunit. In terms of biological role, one of the proteins that surrounds the polypeptide exit tunnel on the outside of the subunit. The polypeptide is Large ribosomal subunit protein uL24 (Coxiella burnetii (strain Dugway 5J108-111)).